A 185-amino-acid chain; its full sequence is Casparian strip membrane protein 5 (185 aa).

The Cytoplasmic segment spans residues 1–25 (MKAEAVESGEASTIIAAPKRGINRG). The chain crosses the membrane as a helical span at residues 26 to 46 (ISIADLILRGVAAIGTFASAL). The Extracellular portion of the chain corresponds to 47–75 (TMGTTSETLTIFTQPIMIRAKYNDLPSLT). A helical transmembrane segment spans residues 76-96 (FFVIANSIVCGYLVLSIPLSI). The Cytoplasmic segment spans residues 97-108 (SHFIRREARITR). The helical transmembrane segment at 109–129 (IILVIFDTAMVELLTAGASAA) threads the bilayer. Over 130 to 160 (TVVVYLAHKRNANWLAICQQFNNFCERISGS) the chain is Extracellular. A helical transmembrane segment spans residues 161–181 (LIGSFASIIMIMLIIITSAVA). Topologically, residues 182 to 185 (LSRH) are cytoplasmic.

The protein belongs to the Casparian strip membrane proteins (CASP) family. As to quaternary structure, homodimer and heterodimers.

The protein localises to the cell membrane. In terms of biological role, regulates membrane-cell wall junctions and localized cell wall deposition. Required for establishment of the Casparian strip membrane domain (CSD) and the subsequent formation of Casparian strips, a cell wall modification of the root endodermis that determines an apoplastic barrier between the intraorganismal apoplasm and the extraorganismal apoplasm and prevents lateral diffusion. This chain is Casparian strip membrane protein 5, found in Populus trichocarpa (Western balsam poplar).